Consider the following 430-residue polypeptide: ATP-dependent RNA helicase RhlB (430 aa).

Positions 9–37 (QKFSDFALHPQVIEALESKGFHYCTPIQA) match the Q motif motif. One can recognise a Helicase ATP-binding domain in the interval 40–219 (LPLTLSGRDV…FEQMNNAEYV (180 aa)). 53-60 (AQTGTGKT) is a binding site for ATP. Positions 165-168 (DEAD) match the DEAD box motif. The Helicase C-terminal domain occupies 245–390 (RLLQTLLEEE…LSKYNSDALM (146 aa)). The interval 392-430 (DLPAPKRLTRPPRSNNGPRRHNSAPRRSGAPRNNRKRAD) is disordered.

The protein belongs to the DEAD box helicase family. RhlB subfamily. Component of the RNA degradosome, which is a multiprotein complex involved in RNA processing and mRNA degradation.

It localises to the cytoplasm. It carries out the reaction ATP + H2O = ADP + phosphate + H(+). Its function is as follows. DEAD-box RNA helicase involved in RNA degradation. Has RNA-dependent ATPase activity and unwinds double-stranded RNA. In Pectobacterium atrosepticum (strain SCRI 1043 / ATCC BAA-672) (Erwinia carotovora subsp. atroseptica), this protein is ATP-dependent RNA helicase RhlB.